The following is a 379-amino-acid chain: Cytochrome b (379 aa).

A run of 4 helical transmembrane segments spans residues 33–53 (FGSL…FLAM), 77–98 (WLIR…FIHV), 113–133 (WNIG…GYVL), and 178–198 (FFAF…VHLL). Heme b is bound by residues histidine 83 and histidine 97. Residues histidine 182 and histidine 196 each contribute to the heme b site. Histidine 201 contributes to the a ubiquinone binding site. The next 4 helical transmembrane spans lie at 226–246 (IKDL…TLFF), 288–308 (LGGV…PLLN), 320–340 (VTQV…WIGG), and 347–367 (FTMI…ILIP).

The protein belongs to the cytochrome b family. The cytochrome bc1 complex contains 11 subunits: 3 respiratory subunits (MT-CYB, CYC1 and UQCRFS1), 2 core proteins (UQCRC1 and UQCRC2) and 6 low-molecular weight proteins (UQCRH/QCR6, UQCRB/QCR7, UQCRQ/QCR8, UQCR10/QCR9, UQCR11/QCR10 and a cleavage product of UQCRFS1). This cytochrome bc1 complex then forms a dimer. Heme b serves as cofactor.

It localises to the mitochondrion inner membrane. In terms of biological role, component of the ubiquinol-cytochrome c reductase complex (complex III or cytochrome b-c1 complex) that is part of the mitochondrial respiratory chain. The b-c1 complex mediates electron transfer from ubiquinol to cytochrome c. Contributes to the generation of a proton gradient across the mitochondrial membrane that is then used for ATP synthesis. This is Cytochrome b (MT-CYB) from Akodon subfuscus (Puno grass mouse).